Consider the following 310-residue polypeptide: Putative S-adenosyl-L-methionine-dependent methyltransferase ML2640 (310 aa).

S-adenosyl-L-methionine is bound by residues Asp132 and 161 to 162 (DL).

It belongs to the UPF0677 family.

In terms of biological role, exhibits S-adenosyl-L-methionine-dependent methyltransferase activity. This Mycobacterium leprae (strain TN) protein is Putative S-adenosyl-L-methionine-dependent methyltransferase ML2640.